Reading from the N-terminus, the 267-residue chain is Probable tetrahydroxynaphthalene reductase MYCGRDRAFT_87994 (267 aa).

NADP(+) contacts are provided by Ile-26, Asp-72, Asn-99, and Arg-132. Ser-149 acts as the Proton donor in catalysis. NADP(+) contacts are provided by Tyr-163, Lys-167, Ile-196, and Thr-198. The active-site Proton acceptor is Tyr-163. The active-site Lowers pKa of active site Tyr is Lys-167.

Belongs to the short-chain dehydrogenases/reductases (SDR) family. In terms of assembly, homotetramer.

It catalyses the reaction scytalone + NADP(+) = naphthalene-1,3,6,8-tetrol + NADPH + H(+). The protein operates within pigment biosynthesis; melanin biosynthesis. Probable tetrahydroxynaphthalene reductase; part of the gene cluster 29 that mediates the biosynthesis dihydroxynaphthalene (DHN)-melanin, a bluish-green pigment and a structural component of the conidial wall. Catalyzes the NADPH-dependent reduction of 1,3,6,8-tetrahydroxynaphthalene (T4HN) into (+)-scytalone. This chain is Probable tetrahydroxynaphthalene reductase MYCGRDRAFT_87994, found in Zymoseptoria tritici (strain CBS 115943 / IPO323) (Speckled leaf blotch fungus).